Consider the following 564-residue polypeptide: NAD-dependent malic enzyme (564 aa).

The active-site Proton donor is the Tyr-102. Arg-155 lines the NAD(+) pocket. Lys-173 (proton acceptor) is an active-site residue. A divalent metal cation contacts are provided by Glu-244, Asp-245, and Asp-268. 2 residues coordinate NAD(+): Asp-268 and Asn-417.

It belongs to the malic enzymes family. In terms of assembly, homotetramer. Mg(2+) is required as a cofactor. Requires Mn(2+) as cofactor.

The catalysed reaction is (S)-malate + NAD(+) = pyruvate + CO2 + NADH. The enzyme catalyses oxaloacetate + H(+) = pyruvate + CO2. The polypeptide is NAD-dependent malic enzyme (Pseudomonas aeruginosa (strain UCBPP-PA14)).